The sequence spans 254 residues: Ribosomal RNA small subunit methyltransferase A (254 aa).

S-adenosyl-L-methionine is bound by residues Asn12, Leu14, Gly38, Glu59, Asp83, and Asn100.

The protein belongs to the class I-like SAM-binding methyltransferase superfamily. rRNA adenine N(6)-methyltransferase family. RsmA subfamily.

The protein localises to the cytoplasm. The enzyme catalyses adenosine(1518)/adenosine(1519) in 16S rRNA + 4 S-adenosyl-L-methionine = N(6)-dimethyladenosine(1518)/N(6)-dimethyladenosine(1519) in 16S rRNA + 4 S-adenosyl-L-homocysteine + 4 H(+). Specifically dimethylates two adjacent adenosines (A1518 and A1519) in the loop of a conserved hairpin near the 3'-end of 16S rRNA in the 30S particle. May play a critical role in biogenesis of 30S subunits. The sequence is that of Ribosomal RNA small subunit methyltransferase A from Mycoplasma mobile (strain ATCC 43663 / 163K / NCTC 11711) (Mesomycoplasma mobile).